The following is a 1550-amino-acid chain: Protein TIME FOR COFFEE (1550 aa).

Disordered regions lie at residues 1 to 191, 207 to 304, 325 to 505, 708 to 736, 779 to 805, 859 to 1023, 1086 to 1130, 1163 to 1196, 1213 to 1296, and 1321 to 1435; these read MDRN…PVSP, VPRK…PVAV, TSKQ…SERG, QGSV…TAQR, RPPN…SATP, FNGS…KAGV, ASLE…QSIA, ALPQ…SQQP, AASA…SVAA, and NSKP…PKHG. Residues 43-80 are compositionally biased toward basic and acidic residues; sequence EAARLRDRGGSNKKDRDRERDRDRERERERDRERDRLN. Acidic residues predominate over residues 100-118; sequence DGGDDSSEESVNDDEEYDD. The segment covering 134 to 151 has biased composition (low complexity); sequence SNNISAASFSSSLSNHHN. Residues 157–171 show a composition bias toward basic residues; the sequence is LHHHHHSHNNNHQRK. Polar residues predominate over residues 241-250; the sequence is RQISSTSPAN. Low complexity predominate over residues 292–301; that stretch reads KSSSSKLSSP. Residues 348-366 show a composition bias toward polar residues; sequence RVSSPISNPQTLPQSSITL. The segment covering 367-379 has biased composition (low complexity); sequence AANSSSSNVSAIA. Residues 409-432 show a composition bias toward polar residues; the sequence is SKSQVPFSNQLKSSGSGEGNSSVL. Basic and acidic residues-rich tracts occupy residues 447–461 and 473–490; these read DSEK…DETI and SDGE…KFEI. 3 stretches are compositionally biased toward polar residues: residues 713–736, 783–803, and 884–992; these read GRSS…TAQR, SGIT…SASA, and LTGQ…NLGL. Positions 1112–1126 are enriched in gly residues; the sequence is SGGGAIGKTSGGNGG. A compositionally biased stretch (polar residues) spans 1164-1173; sequence LPQSSGSLPT. Positions 1174 to 1195 are enriched in low complexity; the sequence is SHHQQLLQQQQQQHMQRSQSQQ. The span at 1234 to 1253 shows a compositional bias: polar residues; the sequence is NMTTSPAGTTKFANANSGFP. A compositionally biased stretch (low complexity) spans 1254 to 1273; that stretch reads QNLVQSSSNQVQSQQWKNNS. Polar residues-rich tracts occupy residues 1274–1296, 1321–1342, and 1351–1360; these read PRTT…SVAA, NSKP…NHQA, and SPSTSSVSKN. The span at 1361–1382 shows a compositional bias: low complexity; it reads ASGSPRTTASASSAANKGGQAS. Composition is skewed to polar residues over residues 1383-1397 and 1405-1419; these read TTTH…NLQP and GGRN…NPTT. Residues 1420 to 1435 show a composition bias toward low complexity; it reads SSGSKSQQQQQLPKHG.

In terms of assembly, interacts with MYC2.

It is found in the nucleus. Functionally, regulator of normal clock function. Acts in the mid to late night. Contributes to the amplitude of circadian clocks. May act on the transcriptional induction of LATE ELONGATED HYPOCOTYL (LHY). Inhibits MYC2 protein accumulation, acting as a negative factor in the JA-signaling pathway. The protein is Protein TIME FOR COFFEE (TIC) of Arabidopsis thaliana (Mouse-ear cress).